The primary structure comprises 131 residues: Large ribosomal subunit protein uL22 (131 aa).

It belongs to the universal ribosomal protein uL22 family. Part of the 50S ribosomal subunit.

Its function is as follows. This protein binds specifically to 23S rRNA; its binding is stimulated by other ribosomal proteins, e.g. L4, L17, and L20. It is important during the early stages of 50S assembly. It makes multiple contacts with different domains of the 23S rRNA in the assembled 50S subunit and ribosome. In terms of biological role, the globular domain of the protein is located near the polypeptide exit tunnel on the outside of the subunit, while an extended beta-hairpin is found that lines the wall of the exit tunnel in the center of the 70S ribosome. The protein is Large ribosomal subunit protein uL22 of Phytoplasma mali (strain AT).